The sequence spans 36 residues: Pancreatic polypeptide (36 aa).

At tyrosine 36 the chain carries Tyrosine amide.

Belongs to the NPY family.

Its subcellular location is the secreted. Functionally, hormone secreted by pancreatic cells that acts as a regulator of pancreatic and gastrointestinal functions probably by signaling through the G protein-coupled receptor NPY4R2. The sequence is that of Pancreatic polypeptide (PPY) from Oryctolagus cuniculus (Rabbit).